The sequence spans 693 residues: MKIFREVFELGNKEIILETGGMARQADGSVTVSCGNNVVLVTTVVKKSVADGTDFFPLSVHYLEKTYAAGKIPGGFLRREGRPSEEQILISRLIDRSIRPSFPDGFFNEIQIVATVLSYDGAFSPDILALIGASASLAISGAPYDDVVAGVRVGYTNGKYILNPNKQDLRDSDLDLVVSGTDDAILMVESEANSLPESVMLGGILYAHKHLKTIINSINRLAKVASKPRIEYSIYQINKFLKSQIKSQFFGEIKNAYTIASKQERNLKLNAIRKNVLEYIFSSDVDGNEYTEKEILEAFHDIEKDLVRSNILEGKPRIDGRCTETIRPINVKIGVLPGVHGSALFTRGETQALVVTTLGSDRDAQLVESLDGIEKCRYMLHYNFPPYSVGECGMVGMAPKRREIGHANLAKRATQAVFPNEEAYPYVVRVVSEILESNGSSSMATVCGSSLSMMDAGVPIAEPVAGIAMGLIKDGAKYAVLSDILGDEDHLGDMDFKVAGTRYGVTALQMDIKIKGISREILEQALEQARVGRLHILGIMNEVIKEHKEAVSDVAPQIHVMNINPAKIKDVVGRGGATVKGIVEKTGAQIDTSDSGEVKVFAKDKKSMDMAVAMIEEIVAEVEEGQVYKGKIVKLLDSGVFVNLLGSQDGYLPFSEIEQAGMKTNSLVEGQGLEVLVQNIDRGGRVKLSLVAR.

Mg(2+) contacts are provided by Asp-489 and Asp-495. A KH domain is found at 556–615 (PQIHVMNINPAKIKDVVGRGGATVKGIVEKTGAQIDTSDSGEVKVFAKDKKSMDMAVAMI). In terms of domain architecture, S1 motif spans 625–693 (GQVYKGKIVK…GRVKLSLVAR (69 aa)).

It belongs to the polyribonucleotide nucleotidyltransferase family. As to quaternary structure, component of the RNA degradosome, which is a multiprotein complex involved in RNA processing and mRNA degradation. The cofactor is Mg(2+).

Its subcellular location is the cytoplasm. The enzyme catalyses RNA(n+1) + phosphate = RNA(n) + a ribonucleoside 5'-diphosphate. Involved in mRNA degradation. Catalyzes the phosphorolysis of single-stranded polyribonucleotides processively in the 3'- to 5'-direction. The protein is Polyribonucleotide nucleotidyltransferase of Francisella tularensis subsp. novicida (strain U112).